A 302-amino-acid polypeptide reads, in one-letter code: Sulfate adenylyltransferase subunit 2 (302 aa).

The disordered stretch occupies residues 280–302 (RQGRAIDHDQSGSMELKKRQGYF).

The protein belongs to the PAPS reductase family. CysD subfamily. In terms of assembly, heterodimer composed of CysD, the smaller subunit, and CysN.

It carries out the reaction sulfate + ATP + H(+) = adenosine 5'-phosphosulfate + diphosphate. It participates in sulfur metabolism; hydrogen sulfide biosynthesis; sulfite from sulfate: step 1/3. Its function is as follows. With CysN forms the ATP sulfurylase (ATPS) that catalyzes the adenylation of sulfate producing adenosine 5'-phosphosulfate (APS) and diphosphate, the first enzymatic step in sulfur assimilation pathway. APS synthesis involves the formation of a high-energy phosphoric-sulfuric acid anhydride bond driven by GTP hydrolysis by CysN coupled to ATP hydrolysis by CysD. This Vibrio vulnificus (strain CMCP6) protein is Sulfate adenylyltransferase subunit 2.